The sequence spans 155 residues: MECPNCHQNASRVIDSRPSDENRAIRRRRECENCGFRFTTFERIETAPLLVIKNDGTREPFNRKKILHGVMAAGQKRPISSDQFEQLVDHVENKVRKQGISEISSKKIGQYVMDELADLDDVAYIRFASIYREFKDMSSFMKTMEDMMAKKGKGN.

Positions 1–11 (MECPNCHQNAS) are enriched in polar residues. The interval 1–22 (MECPNCHQNASRVIDSRPSDEN) is disordered. Residues 3–34 (CPNCHQNASRVIDSRPSDENRAIRRRRECENC) fold into a zinc finger. Residues 49-139 (LLVIKNDGTR…IYREFKDMSS (91 aa)) enclose the ATP-cone domain.

Belongs to the NrdR family. Zn(2+) serves as cofactor.

Functionally, negatively regulates transcription of bacterial ribonucleotide reductase nrd genes and operons by binding to NrdR-boxes. The polypeptide is Transcriptional repressor NrdR (Lactobacillus helveticus (strain DPC 4571)).